We begin with the raw amino-acid sequence, 674 residues long: Growth arrest-specific protein 6 (674 aa).

Positions 1 to 27 (MPPPPGPAAALGTALLLLLLASESSHT) are cleaved as a signal peptide. Residues 50–91 (FEEAKQGHLERECVEEVCSKEEAREVFENDPETEYFYPRYQE) form the Gla domain. A disulfide bridge connects residues Cys62 and Cys67. Ser68 carries the phosphoserine modification. One can recognise an EGF-like 1; calcium-binding domain in the interval 113–151 (LPDQCTPNPCDKKGTHICQDLMGNFFCVCTDGWGGRLCD). 14 disulfides stabilise this stretch: Cys117–Cys130, Cys122–Cys139, Cys141–Cys150, Cys157–Cys168, Cys164–Cys177, Cys179–Cys192, Cys198–Cys209, Cys204–Cys218, Cys220–Cys233, Cys239–Cys248, Cys244–Cys257, Cys259–Cys274, Cys280–Cys566, and Cys441–Cys467. The EGF-like 2; calcium-binding domain occupies 153–193 (DVNECVQKNGGCSQVCHNKPGSFQCACHSGFSLASDGQTCQ). An EGF-like 3; calcium-binding domain is found at 194–234 (DIDECTDSDTCGDARCKNLPGSYSCLCDEGYTYSSKEKTCQ). An EGF-like 4; calcium-binding domain is found at 235–275 (DVDECQQDRCEQTCVNSPGSYTCHCDGRGGLKLSPDMDTCE). 2 Laminin G-like domains span residues 295-467 (GRMF…KMQC) and 474-666 (GSFF…SHSC). Residues Asp326 and Glu328 each coordinate Ca(2+). An N-linked (GlcNAc...) asparagine glycan is attached at Asn417. Arg437 serves as a coordination point for Ca(2+). N-linked (GlcNAc...) asparagine glycosylation is present at Asn488. Thr609 is modified (phosphothreonine). Residue Ser614 is modified to Phosphoserine. Phosphothreonine occurs at positions 617 and 633. Tyr636 carries the post-translational modification Phosphotyrosine. Cysteines 639 and 666 form a disulfide. Asp652 provides a ligand contact to Ca(2+).

In terms of assembly, heterodimer and heterotetramer with AXL. In terms of processing, gamma-carboxyglutamate residues are formed by vitamin K dependent carboxylation. These residues are essential for the binding of calcium.

Its subcellular location is the secreted. Functionally, ligand for tyrosine-protein kinase receptors AXL, TYRO3 and MER whose signaling is implicated in cell growth and survival, cell adhesion and cell migration. GAS6/AXL signaling plays a role in various processes such as endothelial cell survival during acidification by preventing apoptosis, optimal cytokine signaling during human natural killer cell development, hepatic regeneration, gonadotropin-releasing hormone neuron survival and migration, platelet activation, or regulation of thrombotic responses. The sequence is that of Growth arrest-specific protein 6 (Gas6) from Mus musculus (Mouse).